A 629-amino-acid polypeptide reads, in one-letter code: Chaperone protein DnaK (629 aa).

Residues 576-587 (QAYQQQQDAQAG) are compositionally biased toward low complexity. Residues 576–629 (QAYQQQQDAQAGAAGGAGGMGGMGGMADGPGGAADADGDDEEYVDADFEDVDEE) are disordered. A compositionally biased stretch (gly residues) spans 588–607 (AAGGAGGMGGMGGMADGPGG). The segment covering 611–629 (ADGDDEEYVDADFEDVDEE) has biased composition (acidic residues).

It belongs to the heat shock protein 70 family.

Acts as a chaperone. The protein is Chaperone protein DnaK of Halobacterium salinarum (strain ATCC 29341 / DSM 671 / R1).